Consider the following 292-residue polypeptide: Ribosomal protein L11 methyltransferase (292 aa).

S-adenosyl-L-methionine is bound by residues threonine 143, glycine 164, aspartate 186, and asparagine 227.

It belongs to the methyltransferase superfamily. PrmA family.

The protein localises to the cytoplasm. The enzyme catalyses L-lysyl-[protein] + 3 S-adenosyl-L-methionine = N(6),N(6),N(6)-trimethyl-L-lysyl-[protein] + 3 S-adenosyl-L-homocysteine + 3 H(+). In terms of biological role, methylates ribosomal protein L11. This is Ribosomal protein L11 methyltransferase from Hahella chejuensis (strain KCTC 2396).